The following is an 808-amino-acid chain: Phenylalanine--tRNA ligase beta subunit (808 aa).

In terms of domain architecture, tRNA-binding spans 40–149; that stretch reads RPELDFVKIV…DQAEVGKTIR (110 aa). In terms of domain architecture, B5 spans 407 to 484; that stretch reads HKEVRIHTDI…RTKGYDTIQV (78 aa). Asp462, Asp468, Glu471, and Glu472 together coordinate Mg(2+). The region spanning 716 to 808 is the FDX-ACB domain; the sequence is SQFPEAEIDL…LAGKNGFVLR (93 aa).

It belongs to the phenylalanyl-tRNA synthetase beta subunit family. Type 1 subfamily. As to quaternary structure, tetramer of two alpha and two beta subunits. Mg(2+) serves as cofactor.

Its subcellular location is the cytoplasm. It catalyses the reaction tRNA(Phe) + L-phenylalanine + ATP = L-phenylalanyl-tRNA(Phe) + AMP + diphosphate + H(+). This is Phenylalanine--tRNA ligase beta subunit from Leptospira interrogans serogroup Icterohaemorrhagiae serovar Lai (strain 56601).